Reading from the N-terminus, the 756-residue chain is uncharacterized protein (756 aa).

This is an uncharacterized protein from Mycoplasma genitalium (strain ATCC 33530 / DSM 19775 / NCTC 10195 / G37) (Mycoplasmoides genitalium).